The chain runs to 55 residues: Metallothionein-3 (55 aa).

Belongs to the metallothionein superfamily. Type 11 family.

In Yarrowia lipolytica (strain CLIB 122 / E 150) (Yeast), this protein is Metallothionein-3 (MTP3).